The following is a 141-amino-acid chain: Large ribosomal subunit protein uL11A (141 aa).

This sequence belongs to the universal ribosomal protein uL11 family. As to quaternary structure, part of the ribosomal stalk of the 50S ribosomal subunit. Interacts with L10 and the large rRNA to form the base of the stalk. L10 forms an elongated spine to which L12 dimers bind in a sequential fashion forming a multimeric L10(L12)X complex. One or more lysine residues are methylated.

Forms part of the ribosomal stalk which helps the ribosome interact with GTP-bound translation factors. The chain is Large ribosomal subunit protein uL11A from Bacillus cereus (strain ATCC 14579 / DSM 31 / CCUG 7414 / JCM 2152 / NBRC 15305 / NCIMB 9373 / NCTC 2599 / NRRL B-3711).